The primary structure comprises 194 residues: Ribosomal RNA large subunit methyltransferase E (194 aa).

Glycine 48, tryptophan 50, aspartate 66, asparagine 82, and aspartate 110 together coordinate S-adenosyl-L-methionine. The active-site Proton acceptor is lysine 150.

Belongs to the class I-like SAM-binding methyltransferase superfamily. RNA methyltransferase RlmE family.

The protein localises to the cytoplasm. The catalysed reaction is uridine(2552) in 23S rRNA + S-adenosyl-L-methionine = 2'-O-methyluridine(2552) in 23S rRNA + S-adenosyl-L-homocysteine + H(+). Functionally, specifically methylates the uridine in position 2552 of 23S rRNA at the 2'-O position of the ribose in the fully assembled 50S ribosomal subunit. This Picrophilus torridus (strain ATCC 700027 / DSM 9790 / JCM 10055 / NBRC 100828 / KAW 2/3) protein is Ribosomal RNA large subunit methyltransferase E.